The sequence spans 286 residues: Myb family transcription factor PHL7 (286 aa).

The HTH myb-type domain maps to 12–72 (HASKQRLRWT…HLQKYRLAKY (61 aa)). A DNA-binding region (H-T-H motif) is located at residues 43–68 (PKGVLRVMGVQGLTIYHVKSHLQKYR). A disordered region spans residues 74–97 (PDSSSEGKKTDKKESGDMLSGLDG). The span at 78–89 (SEGKKTDKKESG) shows a compositional bias: basic and acidic residues. Positions 104-124 (TEALKLQMEVQKRLHEQLEVQ) form a coiled coil. The LHEQLE signature appears at 117-122 (LHEQLE). The tract at residues 152-227 (LGEPSAPVTG…TGEERLSKKP (76 aa)) is disordered.

This sequence belongs to the MYB-CC family.

Its subcellular location is the nucleus. This Arabidopsis thaliana (Mouse-ear cress) protein is Myb family transcription factor PHL7.